The sequence spans 255 residues: UPF0246 protein Cphy_1568 (255 aa).

Belongs to the UPF0246 family.

This is UPF0246 protein Cphy_1568 from Lachnoclostridium phytofermentans (strain ATCC 700394 / DSM 18823 / ISDg) (Clostridium phytofermentans).